Reading from the N-terminus, the 1037-residue chain is Tyrosine-protein kinase-like otk (1037 aa).

Positions 1–22 (MAALRISVWILVQALMMALVSS) are cleaved as a signal peptide. 2 N-linked (GlcNAc...) asparagine glycosylation sites follow: Asn23 and Asn39. The Extracellular portion of the chain corresponds to 23–582 (NSSHFLQLPQ…GGDGFLVTRA (560 aa)). Ig-like C2-type domains are found at residues 25–115 (SHFL…AKLS), 114–200 (LSVI…RVMS), 252–366 (PEDL…APIN), 369–464 (PGTL…VAIN), and 469–559 (PKFS…VQLV). Cystine bridges form between Cys46-Cys96, Cys138-Cys189, Cys277-Cys355, and Cys400-Cys448. Residues Asn337, Asn418, Asn430, Asn445, Asn458, Asn513, and Asn525 are each glycosylated (N-linked (GlcNAc...) asparagine). Cys491 and Cys543 form a disulfide bridge. A helical membrane pass occupies residues 583-603 (VLITMTVALAYIVLVVGLMLW). Over 604 to 1037 (CRYRRQARKA…LSKAMQSLEK (434 aa)) the chain is Cytoplasmic. Disordered regions lie at residues 618 to 681 (LSTK…KKSA) and 719 to 764 (ATGS…KTSM). The segment covering 653 to 675 (QSRSKSNGDAQKSDDTACSQQSR) has biased composition (polar residues). Position 680 is a phosphoserine (Ser680). One can recognise a Protein kinase; inactive domain in the interval 694 to 1035 (LTELIQIGRG…AALSKAMQSL (342 aa)). Residues 724 to 735 (SDKDADTEKQHS) are compositionally biased toward basic and acidic residues.

Belongs to the protein kinase superfamily. Tyr protein kinase family. Insulin receptor subfamily. In terms of assembly, interacts with plexA; component of a receptor complex that mediates the repulsive signaling in response to Semaphorin ligands.

The protein resides in the cell membrane. Functionally, acts as a calcium-dependent, homophilic cell adhesion molecule that regulates neural recognition during the development of the nervous system. Component of the repulsive Plexin signaling response to regulate motor axon guidance at the embryonic stage. Also component of a receptor complex that is required in the adult visual system to innervate the lamina layer; specific targeting of R1-R6 axons. The chain is Tyrosine-protein kinase-like otk from Drosophila ananassae (Fruit fly).